A 211-amino-acid polypeptide reads, in one-letter code: ATP-dependent dethiobiotin synthetase BioD (211 aa).

10-15 serves as a coordination point for ATP; the sequence is GIGKTY. Residue threonine 14 coordinates Mg(2+). The active site involves lysine 35. Serine 39 provides a ligand contact to substrate. ATP is bound by residues aspartate 44, 105-108, and 165-166; these read EGAG and NC. Mg(2+) is bound by residues aspartate 44 and glutamate 105.

This sequence belongs to the dethiobiotin synthetase family. As to quaternary structure, homodimer. It depends on Mg(2+) as a cofactor.

It localises to the cytoplasm. The catalysed reaction is (7R,8S)-7,8-diammoniononanoate + CO2 + ATP = (4R,5S)-dethiobiotin + ADP + phosphate + 3 H(+). It functions in the pathway cofactor biosynthesis; biotin biosynthesis; biotin from 7,8-diaminononanoate: step 1/2. Catalyzes a mechanistically unusual reaction, the ATP-dependent insertion of CO2 between the N7 and N8 nitrogen atoms of 7,8-diaminopelargonic acid (DAPA, also called 7,8-diammoniononanoate) to form a ureido ring. The protein is ATP-dependent dethiobiotin synthetase BioD of Methanococcus vannielii (strain ATCC 35089 / DSM 1224 / JCM 13029 / OCM 148 / SB).